Here is a 370-residue protein sequence, read N- to C-terminus: Putative transport protein YdiK (370 aa).

Over 1–17 (MVNVRQPRDVAQILLSV) the chain is Periplasmic. The helical transmembrane segment at 18-38 (LFLAIMIVACLWIVQPFILGF) threads the bilayer. Residue Ala-39 is a topological domain, cytoplasmic. Residues 40-60 (WAGTVVIATWPVLLRLQKIMF) form a helical membrane-spanning segment. The Periplasmic segment spans residues 61–65 (GRRSL). Residues 66–86 (AVLVMTLLLVMVFIIPIALLV) traverse the membrane as a helical segment. Over 87 to 106 (NSIVDGSGPLIKAISSGDMT) the chain is Cytoplasmic. A helical membrane pass occupies residues 107-127 (LPDLAWLNTIPVIGAKLYAGW). Topologically, residues 128 to 156 (HNLLDMGGTAIMAKVRPYIGTTTTWFVGQ) are periplasmic. The chain crosses the membrane as a helical span at residues 157–177 (AAHIGRFMVHCALMLLFSALL). At 178–213 (YWRGEQVAQGIRHFATRLAGVRGDAAVLLAAQAIRA) the chain is on the cytoplasmic side. The chain crosses the membrane as a helical span at residues 214 to 234 (VALGVVVTALVQAVLGGIGLA). Residues 235–248 (VSGVPYATLLTVLM) lie on the Periplasmic side of the membrane. The chain crosses the membrane as a helical span at residues 249–269 (ILSCLVQLGPLPVLIPAIIWL). Over 270–274 (YWTGD) the chain is Cytoplasmic. Residues 275-295 (TTWGTVLLVWSGVVGTLDNVI) form a helical membrane-spanning segment. Over 296 to 308 (RPMLIRMGADLPL) the chain is Periplasmic. Residues 309–329 (ILILSGVIGGLIAFGMIGLFI) form a helical membrane-spanning segment. The Cytoplasmic segment spans residues 330–370 (GPVLLAVSWRLFAAWVEEVPPPTDQPEEILEELGEIEKPNK).

Belongs to the autoinducer-2 exporter (AI-2E) (TC 2.A.86) family.

It is found in the cell inner membrane. In Escherichia coli (strain K12), this protein is Putative transport protein YdiK (ydiK).